The primary structure comprises 661 residues: Methyl-accepting chemotaxis protein McpA (661 aa).

At 1 to 16 (MKKILQLIKQRSITRK) the chain is on the cytoplasmic side. The chain crosses the membrane as a helical span at residues 17–37 (LLVSFLSILIIPVVILAIFAY). Topologically, residues 38–281 (QSASSSLDRQ…IHEAAQPVLH (244 aa)) are extracellular. One can recognise a Cache domain in the interval 152–228 (ITDPYKTAST…QSGTELKGDW (77 aa)). The chain crosses the membrane as a helical span at residues 282–302 (LALIVLAAAIIIGIIVMTLII). In terms of domain architecture, HAMP spans 303-355 (RSITTPLKQLVGSSKRISEGDLTETIDIRSKDELGELGKSFNNMASSLRSLIH). The Cytoplasmic portion of the chain corresponds to 303 to 661 (RSITTPLKQL…RDMTKRFKIE (359 aa)). Residue glutamate 370 is modified to Glutamate methyl ester (Glu). The 237-residue stretch at 374–610 (SAAQTSKATE…EVSGASEHIA (237 aa)) folds into the Methyl-accepting transducer domain. 2 positions are modified to deamidated glutamine: glutamine 593 and glutamine 594. Glutamine 594 carries the post-translational modification Glutamate methyl ester (Gln). Glutamate methyl ester (Glu) is present on residues glutamate 629 and glutamate 636.

It belongs to the methyl-accepting chemotaxis (MCP) protein family. Interacts with FloT. Post-translationally, deamidated by CheD on Gln-593 and Gln-594, producing glutamate residues. The glutamate residues are then methylated. Other additional sites are deamidated and methylated as well.

Its subcellular location is the cell membrane. It localises to the membrane raft. Its function is as follows. Chemotactic-signal transducers respond to changes in the concentration of attractants and repellents in the environment, transduce a signal from the outside to the inside of the cell, and facilitate sensory adaptation through the variation of the level of methylation. All amino acids serve as attractants in B.subtilis, they appear to cause an increase in the turnover methyl groups, leading to methylation of an unidentified acceptor, while repellents have been shown to cause a decrease in methyl group turnover. The methyl groups are added by a methyltransferase and removed by a methylesterase. McpA is required for taxis towards glucose and alpha-methylglucoside. This chain is Methyl-accepting chemotaxis protein McpA (mcpA), found in Bacillus subtilis (strain 168).